Reading from the N-terminus, the 480-residue chain is G-rich sequence factor 1 (480 aa).

The transit peptide at 1–117 directs the protein to the mitochondrion; that stretch reads MAGTRWVLGA…AAAAVPTRSY (117 aa). RRM domains follow at residues 122 to 246 and 250 to 326; these read KTTY…SSPV and GVVR…PSRR. Ser-244 carries the phosphoserine modification. Ser-335 bears the Phosphoserine mark. The 80-residue stretch at 401-480 folds into the RRM 3 domain; that stretch reads HFVHMRGLPF…LFLNSCPKGK (80 aa).

As to quaternary structure, monomer. Found in a complex with DDX28, DHX30, FASTKD2 and FASTKD5. Interacts with the mitochondrial RNase P complex subunit TRMT10C/MRPP1. Interacts with the 2 components of the mitochondrial degradosome complex, PNPT1 and SUPV3L1, in an RNA-dependent manner.

The protein localises to the mitochondrion matrix. It is found in the cytoplasm. Its function is as follows. Regulator of post-transcriptional mitochondrial gene expression, required for assembly of the mitochondrial ribosome and for recruitment of mRNA and lncRNA. Binds RNAs containing the 14 base G-rich element. Preferentially binds RNAs transcribed from three contiguous genes on the light strand of mtDNA, the ND6 mRNA, and the long non-coding RNAs for MT-CYB and MT-ND5, each of which contains multiple consensus binding sequences. Involved in the degradosome-mediated decay of non-coding mitochondrial transcripts (MT-ncRNA) and tRNA-like molecules. Acts by unwinding G-quadruplex RNA structures in MT-ncRNA, thus facilitating their degradation by the degradosome. G-quadruplexes (G4) are non-canonical 4 stranded structures formed by transcripts from the light strand of mtDNA. This chain is G-rich sequence factor 1 (GRSF1), found in Homo sapiens (Human).